Here is a 331-residue protein sequence, read N- to C-terminus: UPF0324 membrane protein SA0329 (331 aa).

Helical transmembrane passes span 9-26 (FMIG…SFLA), 31-48 (ILDK…AILY), 69-88 (LLRF…DIIG), 93-115 (LLAI…NKLL), 122-144 (ALLL…APIF), 154-176 (SIGI…YAIF), 183-202 (YGAW…LAGG), 217-234 (LGRV…ILIM), 247-269 (ISIP…VTIP), 273-295 (LNIL…GLNV), and 308-330 (LMTI…HWLY).

The protein belongs to the UPF0324 family.

Its subcellular location is the cell membrane. This chain is UPF0324 membrane protein SA0329, found in Staphylococcus aureus (strain N315).